The primary structure comprises 585 residues: Putative phospholipase B-like 2 (585 aa).

Residues 1 to 35 (MAAPMDRTHGGRAARALRRALALASLAGLLLSGLA) form the signal peptide. N-linked (GlcNAc...) asparagine glycosylation is found at Asn-84, Asn-102, and Asn-106. A disulfide bridge links Cys-138 with Cys-148. Asn-227 and Asn-432 each carry an N-linked (GlcNAc...) asparagine glycan. Cys-488 and Cys-491 are joined by a disulfide. An N-linked (GlcNAc...) asparagine glycan is attached at Asn-511.

This sequence belongs to the phospholipase B-like family. As to quaternary structure, interacts with IGF2R. In terms of processing, glycosylated; contains mannose 6-phosphate sugars.

It localises to the lysosome lumen. Putative phospholipase. The protein is Putative phospholipase B-like 2 (Plbd2) of Rattus norvegicus (Rat).